The chain runs to 357 residues: UDP-N-acetylglucosamine--N-acetylmuramyl-(pentapeptide) pyrophosphoryl-undecaprenol N-acetylglucosamine transferase (357 aa).

UDP-N-acetyl-alpha-D-glucosamine-binding positions include 14–16, Arg-168, Ser-198, and Gln-292; that span reads TAG.

This sequence belongs to the glycosyltransferase 28 family. MurG subfamily.

It localises to the cell membrane. It carries out the reaction di-trans,octa-cis-undecaprenyl diphospho-N-acetyl-alpha-D-muramoyl-L-alanyl-D-glutamyl-meso-2,6-diaminopimeloyl-D-alanyl-D-alanine + UDP-N-acetyl-alpha-D-glucosamine = di-trans,octa-cis-undecaprenyl diphospho-[N-acetyl-alpha-D-glucosaminyl-(1-&gt;4)]-N-acetyl-alpha-D-muramoyl-L-alanyl-D-glutamyl-meso-2,6-diaminopimeloyl-D-alanyl-D-alanine + UDP + H(+). Its pathway is cell wall biogenesis; peptidoglycan biosynthesis. Cell wall formation. Catalyzes the transfer of a GlcNAc subunit on undecaprenyl-pyrophosphoryl-MurNAc-pentapeptide (lipid intermediate I) to form undecaprenyl-pyrophosphoryl-MurNAc-(pentapeptide)GlcNAc (lipid intermediate II). The sequence is that of UDP-N-acetylglucosamine--N-acetylmuramyl-(pentapeptide) pyrophosphoryl-undecaprenol N-acetylglucosamine transferase from Oceanobacillus iheyensis (strain DSM 14371 / CIP 107618 / JCM 11309 / KCTC 3954 / HTE831).